A 229-amino-acid polypeptide reads, in one-letter code: Ribose-5-phosphate isomerase A (229 aa).

Substrate-binding positions include 28-31 (TGST), 84-87 (DGAD), and 97-100 (KGGG). Catalysis depends on E106, which acts as the Proton acceptor. A substrate-binding site is contributed by K124.

The protein belongs to the ribose 5-phosphate isomerase family. As to quaternary structure, homodimer.

The enzyme catalyses aldehydo-D-ribose 5-phosphate = D-ribulose 5-phosphate. It participates in carbohydrate degradation; pentose phosphate pathway; D-ribose 5-phosphate from D-ribulose 5-phosphate (non-oxidative stage): step 1/1. Catalyzes the reversible conversion of ribose-5-phosphate to ribulose 5-phosphate. This chain is Ribose-5-phosphate isomerase A, found in Lacticaseibacillus paracasei (strain ATCC 334 / BCRC 17002 / CCUG 31169 / CIP 107868 / KCTC 3260 / NRRL B-441) (Lactobacillus paracasei).